We begin with the raw amino-acid sequence, 263 residues long: Lens fiber major intrinsic protein (263 aa).

Residues 1–9 (MWELRSASF) are Cytoplasmic-facing. Residues 10 to 29 (WRAIFAEFFATLFYVFFGLG) form a helical membrane-spanning segment. The Extracellular portion of the chain corresponds to 30 to 41 (ASLRWTPGPLHV). A helical transmembrane segment spans residues 42 to 59 (LQVALAFGLALATLVQAV). At 60–61 (GH) the chain is on the cytoplasmic side. Residues 62 to 77 (ISGAHVNPAVTFAFLV) constitute an intramembrane region (discontinuously helical). The short motif at 68–70 (NPA) is the NPA 1 element. Over 78–82 (GSQMS) the chain is Cytoplasmic. Residues 83 to 106 (LLRAFCYMAAQLLGAVAGAAVLYS) form a helical membrane-spanning segment. Over 107 to 127 (VTPPAVRGNLALNTLHPGVSV) the chain is Extracellular. A helical membrane pass occupies residues 128–148 (GQATTVEIFLTLQFVLCIFAT). The Cytoplasmic portion of the chain corresponds to 149-156 (YDERRNGR). A helical membrane pass occupies residues 157 to 175 (LGSVALAVGFSLTLGHLFG). Topologically, residues 176-178 (MYY) are extracellular. The segment at residues 179–193 (TGAGMNPARSFAPAI) is an intramembrane region (discontinuously helical). The short motif at 184-186 (NPA) is the NPA 2 element. Residues 194 to 200 (LTRNFTN) are Extracellular-facing. A helical membrane pass occupies residues 201-222 (HWVYWVGPIIGGGLGSLLYDFL). Over 223-263 (LFPRLKSVSERLSILKGARPSDSNGQPEGTGEPVELKTQAL) the chain is Cytoplasmic. Residues 227–237 (LKSVSERLSIL) are interaction with CALM. Ser235, Ser243, and Ser245 each carry phosphoserine. The disordered stretch occupies residues 240–263 (ARPSDSNGQPEGTGEPVELKTQAL). Asn246 is modified (deamidated asparagine).

This sequence belongs to the MIP/aquaporin (TC 1.A.8) family. As to quaternary structure, homotetramer; each monomer provides an independent water pore. Two homotetramers on opposing membranes can dimerize, forming a cell-cell junction. Interacts with CALM; the calcium-calmodulin/CALM complex interacts with the cytoplasmic domains of two aquaporins, leading to channel closure. Interacts with BFSP1 (via C-terminus); prevents calcium-dependent inhibition of the water channel activity. Post-translationally, subject to partial proteolytic cleavage in the eye lens core. Partial proteolysis promotes interactions between tetramers from adjoining membranes. In terms of processing, fatty acylated at Met-1 and Lys-238. The acyl modifications, in decreasing order of ion abundance, are: oleoyl (C18:1) &gt; palmitoyl (C16:0) &gt; stearoyl (C18:0) &gt; eicosenoyl (C20:1) &gt; dihomo-gamma-linolenoyl (C20:3) &gt; palmitoleoyl (C16:1) &gt; eicosadienoyl (C20:2).

It localises to the cell membrane. It is found in the cell junction. The catalysed reaction is H2O(in) = H2O(out). Its activity is regulated as follows. The water channel activity is inhibited by calcium through calmodulin/CALM. Functionally, aquaporins form homotetrameric transmembrane channels, with each monomer independently mediating water transport across the plasma membrane along its osmotic gradient. Specifically expressed in lens fiber cells, this aquaporin is crucial for maintaining lens water homeostasis and transparency. Beyond water permeability, it also acts as a cell-to-cell adhesion molecule, forming thin junctions between lens fiber cells that are essential for maintaining the ordered structure and transparency of the lens. The polypeptide is Lens fiber major intrinsic protein (Canis lupus familiaris (Dog)).